The following is a 212-amino-acid chain: Uridine kinase (212 aa).

Residue 13 to 20 (GGSGSGKT) participates in ATP binding.

This sequence belongs to the uridine kinase family.

Its subcellular location is the cytoplasm. It catalyses the reaction uridine + ATP = UMP + ADP + H(+). It carries out the reaction cytidine + ATP = CMP + ADP + H(+). The protein operates within pyrimidine metabolism; CTP biosynthesis via salvage pathway; CTP from cytidine: step 1/3. It functions in the pathway pyrimidine metabolism; UMP biosynthesis via salvage pathway; UMP from uridine: step 1/1. The protein is Uridine kinase of Bacillus cereus (strain G9842).